Consider the following 257-residue polypeptide: Hydroxyacylglutathione hydrolase (257 aa).

The Zn(2+) site is built by H54, H56, D58, H59, H113, D137, and H175.

Belongs to the metallo-beta-lactamase superfamily. Glyoxalase II family. In terms of assembly, monomer. The cofactor is Zn(2+).

It catalyses the reaction an S-(2-hydroxyacyl)glutathione + H2O = a 2-hydroxy carboxylate + glutathione + H(+). It participates in secondary metabolite metabolism; methylglyoxal degradation; (R)-lactate from methylglyoxal: step 2/2. Functionally, thiolesterase that catalyzes the hydrolysis of S-D-lactoyl-glutathione to form glutathione and D-lactic acid. In Microcystis aeruginosa (strain NIES-843 / IAM M-2473), this protein is Hydroxyacylglutathione hydrolase.